Reading from the N-terminus, the 43-residue chain is Thaumatin-like protein 1 (43 aa).

Belongs to the thaumatin family.

This is Thaumatin-like protein 1 from Glebionis coronaria (Crown daisy).